The primary structure comprises 460 residues: UDP-glycosyltransferase 74B1 (460 aa).

Residue histidine 22 is the Proton acceptor of the active site. Histidine 22 is an an anthocyanidin binding site. Aspartate 113 functions as the Charge relay in the catalytic mechanism. Threonine 135, glutamine 339, histidine 354, tryptophan 357, asparagine 358, serine 359, glutamate 362, aspartate 378, and glutamine 379 together coordinate UDP-alpha-D-glucose.

It belongs to the UDP-glycosyltransferase family. As to expression, expressed in the vasculature, the apical meristems of roots, shoots and inflorescence, and the junction of organ or branches.

It catalyses the reaction (Z)-2-phenyl-1-thioacetohydroximate + UDP-alpha-D-glucose = (Z)-desulfoglucotropeolin + UDP. The catalysed reaction is a (Z)-omega-(methylsulfanyl)alkyl-thiohydroximate + UDP-alpha-D-glucose = an aliphatic (Z)-desulfo-glucosinolate + UDP. The enzyme catalyses (Z)-2-(indol-3-yl)-1-thioacetohydroximate + UDP-alpha-D-glucose = (Z)-indolylmethyl desulfoglucosinolate + UDP. Its function is as follows. Involved in the biosynthesis of glucosinolate. In in vitro assay, may use phenylacetothiohydroximate (PATH), but not phenylacetic acid (PAA), indole-3-acetic acid (IAA) or salicylic acid (SA) as substrate. Specific for the thiohydroximate functional group and does not glucosylate the carboxylate group or a hydroxyl group. The chain is UDP-glycosyltransferase 74B1 (UGT74B1) from Arabidopsis thaliana (Mouse-ear cress).